The chain runs to 56 residues: Large ribosomal subunit protein bL33 (56 aa).

Belongs to the bacterial ribosomal protein bL33 family.

In Rickettsia typhi (strain ATCC VR-144 / Wilmington), this protein is Large ribosomal subunit protein bL33.